Here is a 156-residue protein sequence, read N- to C-terminus: uncharacterized protein (156 aa).

Helical transmembrane passes span Leu6–Ala26, Phe34–Pro54, Cys68–Ile88, Trp100–Leu120, and Phe129–Glu149.

The protein localises to the cell membrane. This is an uncharacterized protein from Methanocaldococcus jannaschii (strain ATCC 43067 / DSM 2661 / JAL-1 / JCM 10045 / NBRC 100440) (Methanococcus jannaschii).